Reading from the N-terminus, the 1234-residue chain is DNA-directed RNA polymerase subunit beta (1234 aa).

The tract at residues 1169–1234 is disordered; the sequence is ESVDEDADEL…LDLDDFGDEH (66 aa). Composition is skewed to acidic residues over residues 1171–1180 and 1191–1234; these read VDEDADELEV and EKEE…GDEH.

Belongs to the RNA polymerase beta chain family. As to quaternary structure, the RNAP catalytic core consists of 2 alpha, 1 beta, 1 beta' and 1 omega subunit. When a sigma factor is associated with the core the holoenzyme is formed, which can initiate transcription.

It carries out the reaction RNA(n) + a ribonucleoside 5'-triphosphate = RNA(n+1) + diphosphate. Functionally, DNA-dependent RNA polymerase catalyzes the transcription of DNA into RNA using the four ribonucleoside triphosphates as substrates. The protein is DNA-directed RNA polymerase subunit beta of Clostridium botulinum (strain Langeland / NCTC 10281 / Type F).